Reading from the N-terminus, the 360-residue chain is MKPSMLAKLDQLTERLDELNVLLMQEDATSNMDNYRKMTREHAELGPLVALYGNYRQADSDIQDAQGMLSDPDMKEFAQEEIAAAKTRMEQLEIDLQKMLLPKDPNDDRNIFLEIRAGTGGDEAALFAGDLLRMYSRFAERNRWQIEMVSESASEVGGYKEVIVRIIGFGAYSKLKFESGGHRVQRVPATETQGRIHTSACTVAIMPEADEVEDVNINPADLRIDTYRASGAGGQHINKTDSAVRITHIPTGIVVECQDDRSQHKNKASALKVLAARIKDVQLREQQSKEAATRKSLIGSGDRSERIRTYNFPQGRMTDHRINLTLYKLDFIMDGDLTELTNALAAEHQAELLAALGDAN.

Position 235 is an N5-methylglutamine (Gln235).

Belongs to the prokaryotic/mitochondrial release factor family. Post-translationally, methylated by PrmC. Methylation increases the termination efficiency of RF1.

Its subcellular location is the cytoplasm. Functionally, peptide chain release factor 1 directs the termination of translation in response to the peptide chain termination codons UAG and UAA. In Janthinobacterium sp. (strain Marseille) (Minibacterium massiliensis), this protein is Peptide chain release factor 1.